The chain runs to 95 residues: Co-chaperonin GroES (95 aa).

It belongs to the GroES chaperonin family. Heptamer of 7 subunits arranged in a ring. Interacts with the chaperonin GroEL.

It localises to the cytoplasm. In terms of biological role, together with the chaperonin GroEL, plays an essential role in assisting protein folding. The GroEL-GroES system forms a nano-cage that allows encapsulation of the non-native substrate proteins and provides a physical environment optimized to promote and accelerate protein folding. GroES binds to the apical surface of the GroEL ring, thereby capping the opening of the GroEL channel. In Chlorobium phaeovibrioides (strain DSM 265 / 1930) (Prosthecochloris vibrioformis (strain DSM 265)), this protein is Co-chaperonin GroES.